The sequence spans 752 residues: Probable beta-glucosidase D (752 aa).

Residues 1 to 18 (MRFVSLAVGAALLGAAGA) form the signal peptide. N-linked (GlcNAc...) asparagine glycosylation is found at asparagine 187 and asparagine 237. The active site involves aspartate 265. 10 N-linked (GlcNAc...) asparagine glycosylation sites follow: asparagine 299, asparagine 343, asparagine 441, asparagine 510, asparagine 532, asparagine 571, asparagine 586, asparagine 638, asparagine 661, and asparagine 743.

This sequence belongs to the glycosyl hydrolase 3 family.

The protein resides in the secreted. The catalysed reaction is Hydrolysis of terminal, non-reducing beta-D-glucosyl residues with release of beta-D-glucose.. Its pathway is glycan metabolism; cellulose degradation. Functionally, beta-glucosidases are one of a number of cellulolytic enzymes involved in the degradation of cellulosic biomass. Catalyzes the last step releasing glucose from the inhibitory cellobiose. In Aspergillus flavus (strain ATCC 200026 / FGSC A1120 / IAM 13836 / NRRL 3357 / JCM 12722 / SRRC 167), this protein is Probable beta-glucosidase D (bglD).